The primary structure comprises 243 residues: 1-(5-phosphoribosyl)-5-[(5-phosphoribosylamino)methylideneamino] imidazole-4-carboxamide isomerase (243 aa).

Asp-8 (proton acceptor) is an active-site residue. Asp-129 acts as the Proton donor in catalysis.

The protein belongs to the HisA/HisF family.

The protein localises to the cytoplasm. It carries out the reaction 1-(5-phospho-beta-D-ribosyl)-5-[(5-phospho-beta-D-ribosylamino)methylideneamino]imidazole-4-carboxamide = 5-[(5-phospho-1-deoxy-D-ribulos-1-ylimino)methylamino]-1-(5-phospho-beta-D-ribosyl)imidazole-4-carboxamide. It participates in amino-acid biosynthesis; L-histidine biosynthesis; L-histidine from 5-phospho-alpha-D-ribose 1-diphosphate: step 4/9. The chain is 1-(5-phosphoribosyl)-5-[(5-phosphoribosylamino)methylideneamino] imidazole-4-carboxamide isomerase from Brucella anthropi (strain ATCC 49188 / DSM 6882 / CCUG 24695 / JCM 21032 / LMG 3331 / NBRC 15819 / NCTC 12168 / Alc 37) (Ochrobactrum anthropi).